The primary structure comprises 191 residues: MSQTITLIKDKILSDNYFTLRNITYDLTRRNGEVIRHKREVYDRGNGATILLYNSTKKTVVLVRQFRVATWVNGNQDGMLIETCAGLLDNDEPEVCIRKEAIEETGYDVGEVRKIFELYMSPGGVTELIHFFIAEYHDSERASIGGGVEDEEIEVLELPFSRALEMVRSGEIRDGKTVLLLNYLQTSHLMD.

Residues Tyr-17, 38-40 (KRE), Arg-67, and 85-87 (AGL) contribute to the GDP-alpha-D-mannose site. Residues 43-180 (DRGNGATILL…EIRDGKTVLL (138 aa)) form the Nudix hydrolase domain. Mg(2+)-binding residues include Ala-85, Glu-100, and Glu-104. A Nudix box motif is present at residues 86-106 (GLLDNDEPEVCIRKEAIEETG). GDP-alpha-D-mannose-binding positions include Glu-104, Glu-127, 150–151 (DE), and Lys-176. Glu-151 is a Mg(2+) binding site.

It belongs to the Nudix hydrolase family. NudK subfamily. As to quaternary structure, homodimer. Mg(2+) serves as cofactor.

The catalysed reaction is GDP-alpha-D-mannose + H2O = alpha-D-mannose 1-phosphate + GMP + 2 H(+). Nucleoside diphosphate sugar hydrolase that hydrolyzes GDP-mannose as its preferred substrate, yielding GMP and mannose-1-phosphate. The polypeptide is GDP-mannose pyrophosphatase (nudK) (Salmonella typhi).